The chain runs to 397 residues: Lysophospholipid transporter LplT (397 aa).

The Periplasmic portion of the chain corresponds to 1–17 (MSESVHTNTSLWSKGMK). A helical membrane pass occupies residues 18–38 (AVIVAQFLSAFGDNALLFATL). Over 39–52 (ALLKAQFYPEWSQP) the chain is Cytoplasmic. The chain crosses the membrane as a helical span at residues 53-73 (ILQMVFVGAYILFAPFVGQVA). Topologically, residues 74–90 (DSFAKGRVMMFANGLKL) are periplasmic. Residues 91–111 (LGAASICFGINPFLGYTLVGV) traverse the membrane as a helical segment. Over 112 to 144 (GAAAYSPAKYGILGELTTGSKLVKANGLMEAST) the chain is Cytoplasmic. Residues 145–165 (IAAILLGSVAGGVLADWHVLV) traverse the membrane as a helical segment. Residue alanine 166 is a topological domain, periplasmic. A helical membrane pass occupies residues 167–187 (LAACALAYGGAVVANIYIPKL). The Cytoplasmic segment spans residues 188–226 (AAARPGQSWNLINMTRSFLNACTSLWRNGETRFSLVGTS). The helical transmembrane segment at 227 to 247 (LFWGAGVTLRFLLVLWVPVAL) threads the bilayer. At 248-256 (GITDNATPT) the chain is on the periplasmic side. The helical transmembrane segment at 257-277 (YLNAMVAIGIVVGAGAAAKLV) threads the bilayer. Topologically, residues 278–280 (TLE) are cytoplasmic. A helical transmembrane segment spans residues 281–301 (TVSRCMPAGILIGVVVLIFSL). Residues 302–304 (QHE) lie on the Periplasmic side of the membrane. Residues 305–325 (LLPAYALLMLIGVLGGFFVVP) form a helical membrane-spanning segment. Residues 326 to 343 (LNALLQERGKKSVGAGNA) lie on the Cytoplasmic side of the membrane. Residues 344 to 364 (IAVQNLGENSAMLLMLGIYSL) form a helical membrane-spanning segment. At 365 to 366 (AV) the chain is on the periplasmic side. A helical membrane pass occupies residues 367–387 (MVGIPVVPIGIGFGALFALAI). Topologically, residues 388-397 (TALWIWQRRH) are cytoplasmic.

The protein belongs to the major facilitator superfamily. LplT (TC 2.A.1.42) family.

It localises to the cell inner membrane. Functionally, catalyzes the facilitated diffusion of 2-acyl-glycero-3-phosphoethanolamine (2-acyl-GPE) into the cell. The polypeptide is Lysophospholipid transporter LplT (Escherichia coli (strain SMS-3-5 / SECEC)).